A 489-amino-acid chain; its full sequence is Sphingolipid C9-methyltransferase (489 aa).

2 consecutive transmembrane segments (helical) span residues 29–49 and 59–79; these read GAKN…PLFV and TFIF…WTVL. Residues 202–203, 239–247, 265–270, and 295–296 each bind S-adenosyl-L-methionine; these read YT, LLDLGCGWG, TLGKNQ, and YR.

This sequence belongs to the CFA/CMAS family.

The protein resides in the membrane. The catalysed reaction is a (4E,8E)-4-sphinga-4,8-dienine ceramide + S-adenosyl-L-methionine = a 9-methyl-(4E,8E)-sphinga-4,8-dienine ceramide + S-adenosyl-L-homocysteine + H(+). It functions in the pathway lipid metabolism; sphingolipid metabolism. In terms of biological role, catalyzes methylation of the sphingoid base component of glucosylceramides (GluCers) at the C9-position. Sphingolipid C9-methylation requires 4,8-desaturated ceramides as substrates. Glucosylceramides play important roles in growth, differentiation and pathogenicity. The methyl group at the C9-position distinguishes fungal glucosylceramides from those of plants and animals, and may thus play a role in host-pathogen interactions enabling the host to recognize the fungal attack and initiate specific defense responses. The polypeptide is Sphingolipid C9-methyltransferase (Komagataella phaffii (strain GS115 / ATCC 20864) (Yeast)).